Here is a 230-residue protein sequence, read N- to C-terminus: Large ribosomal subunit protein uL1 (230 aa).

The protein belongs to the universal ribosomal protein uL1 family. In terms of assembly, part of the 50S ribosomal subunit.

In terms of biological role, binds directly to 23S rRNA. The L1 stalk is quite mobile in the ribosome, and is involved in E site tRNA release. Its function is as follows. Protein L1 is also a translational repressor protein, it controls the translation of the L11 operon by binding to its mRNA. The protein is Large ribosomal subunit protein uL1 of Bacillus cereus (strain B4264).